The primary structure comprises 170 residues: Large ribosomal subunit protein bL17 (170 aa).

The protein belongs to the bacterial ribosomal protein bL17 family. Part of the 50S ribosomal subunit. Contacts protein L32.

In Azobacteroides pseudotrichonymphae genomovar. CFP2, this protein is Large ribosomal subunit protein bL17.